We begin with the raw amino-acid sequence, 546 residues long: Alpha-taxilin (546 aa).

Disordered regions lie at residues 1–170 (MKNQ…GLGK) and 482–546 (NKRV…SARA). The span at 11 to 21 (AKQSNPKSSPG) shows a compositional bias: polar residues. Basic and acidic residues-rich tracts occupy residues 70–80 (DVSEELSRQLE) and 143–158 (EEIR…DHRR). Residue serine 72 is modified to Phosphoserine. The stretch at 186–491 (EEKLAALCKK…NKRVQDLSAG (306 aa)) forms a coiled coil. At serine 515 the chain carries Phosphoserine. Over residues 530–546 (TEASGQTGPQEPTSARA) the composition is skewed to polar residues.

Belongs to the taxilin family. Binds to the C-terminal coiled coil region of syntaxin family members STX1A, STX3A and STX4A, but not when these proteins are complexed with SNAP25, VAMP2 or STXBP1, suggesting that it interacts with syntaxins that do not form the SNARE complex. In terms of tissue distribution, ubiquitous, with much higher expression in heart, kidney, liver and pancreas.

In terms of biological role, may be involved in intracellular vesicle traffic and potentially in calcium-dependent exocytosis in neuroendocrine cells. The chain is Alpha-taxilin (TXLNA) from Homo sapiens (Human).